We begin with the raw amino-acid sequence, 173 residues long: Dual-action ribosomal maturation protein DarP (173 aa).

It belongs to the DarP family.

The protein resides in the cytoplasm. Functionally, member of a network of 50S ribosomal subunit biogenesis factors which assembles along the 30S-50S interface, preventing incorrect 23S rRNA structures from forming. Promotes peptidyl transferase center (PTC) maturation. The chain is Dual-action ribosomal maturation protein DarP from Pseudomonas entomophila (strain L48).